A 467-amino-acid chain; its full sequence is Probable circularly permuted 1,3-beta-glucanase TOS1 (467 aa).

Positions 1 to 21 (MKFSSTTLLAGLSSLTATVSA) are cleaved as a signal peptide. Residues 158–172 (PAVSSAAADDNANSG) show a composition bias toward low complexity. Disordered stretches follow at residues 158–187 (PAVSSAAADDNANSGSGSGSSAGSGSGYGS) and 200–223 (SDISTKSAPTSTSAQPSSSETASV). Positions 173-185 (SGSGSSAGSGSGY) are enriched in gly residues. A compositionally biased stretch (low complexity) spans 203-222 (STKSAPTSTSAQPSSSETAS). The ExDxxE motif motif lies at 374 to 379 (ELDLFE). Residues 391 to 413 (HLHDGQGSSQNSNNGGGGSQDYF) are disordered.

It belongs to the PGA52 family. In terms of processing, cleaved by KEX2 in vitro.

It is found in the secreted. The enzyme catalyses Hydrolysis of (1-&gt;3)-beta-D-glucosidic linkages in (1-&gt;3)-beta-D-glucans.. Its function is as follows. Probable circularly permuted 1,3-beta-glucanase involved in cell wall modification through beta-1,3-glucan network alterations such as increased branching or remodeling. Plays a role in engulfment by host macrophages. The protein is Probable circularly permuted 1,3-beta-glucanase TOS1 of Candida albicans (strain SC5314 / ATCC MYA-2876) (Yeast).